We begin with the raw amino-acid sequence, 568 residues long: Sulfite reductase [NADPH] hemoprotein beta-component (568 aa).

4 residues coordinate [4Fe-4S] cluster: Cys-425, Cys-431, Cys-470, and Cys-474. Cys-474 contributes to the siroheme binding site.

This sequence belongs to the nitrite and sulfite reductase 4Fe-4S domain family. In terms of assembly, alpha(8)-beta(8). The alpha component is a flavoprotein, the beta component is a hemoprotein. Siroheme serves as cofactor. Requires [4Fe-4S] cluster as cofactor.

The catalysed reaction is hydrogen sulfide + 3 NADP(+) + 3 H2O = sulfite + 3 NADPH + 4 H(+). Its pathway is sulfur metabolism; hydrogen sulfide biosynthesis; hydrogen sulfide from sulfite (NADPH route): step 1/1. Component of the sulfite reductase complex that catalyzes the 6-electron reduction of sulfite to sulfide. This is one of several activities required for the biosynthesis of L-cysteine from sulfate. The sequence is that of Sulfite reductase [NADPH] hemoprotein beta-component from Xanthomonas campestris pv. campestris (strain B100).